The following is a 436-amino-acid chain: Protein TolB homolog (436 aa).

The N-terminal stretch at 1 to 27 (MRHSIRLTAALLLAFIACFSFPLSAMA) is a signal peptide.

It belongs to the TolB family.

The protein localises to the periplasm. This Chlorobium luteolum (strain DSM 273 / BCRC 81028 / 2530) (Pelodictyon luteolum) protein is Protein TolB homolog.